Here is a 250-residue protein sequence, read N- to C-terminus: ATP synthase subunit a (250 aa).

The next 6 membrane-spanning stretches (helical) occupy residues 26–46 (FTNA…FLYL), 84–104 (FFPM…LGMV), 114–134 (IIVT…YGFY), 143–163 (LFVP…IEII), 193–213 (FVAS…LPLI), and 216–236 (VALT…FAVL).

The protein belongs to the ATPase A chain family. As to quaternary structure, F-type ATPases have 2 components, CF(1) - the catalytic core - and CF(0) - the membrane proton channel. CF(1) has five subunits: alpha(3), beta(3), gamma(1), delta(1), epsilon(1). CF(0) has three main subunits: a(1), b(2) and c(9-12). The alpha and beta chains form an alternating ring which encloses part of the gamma chain. CF(1) is attached to CF(0) by a central stalk formed by the gamma and epsilon chains, while a peripheral stalk is formed by the delta and b chains.

The protein localises to the cell inner membrane. In terms of biological role, key component of the proton channel; it plays a direct role in the translocation of protons across the membrane. This chain is ATP synthase subunit a, found in Rhizobium meliloti (strain 1021) (Ensifer meliloti).